The following is a 79-amino-acid chain: Hematopoietic cell signal transducer (79 aa).

A signal peptide spans 1–18 (MVPPGNILFLLLLPVATA). Residues 19 to 35 (QMTPGSCSGCGPLSLPL) lie on the Extracellular side of the membrane. A helical membrane pass occupies residues 36–56 (LAGLVAADAVVSLLIVVVVFV). Over 57–79 (CARLRSRPTQEDDKIYINMPGRG) the chain is Cytoplasmic. The residue at position 72 (Tyr72) is a Phosphotyrosine. Residues 72 to 74 (YIN) form a GRB2 binding site region. A PIK3R1 binding site region spans residues 72-75 (YINM).

It belongs to the DAP10 family. As to quaternary structure, homodimer; Disulfide-linked. Heterohexamer composed of four subunits of HCST/DAP10 and two subunits of KLRK1. Interacts (via transmembrane domain) with KLRK1 (via transmembrane domain); the interaction is required for KLRK1 NK cell surface and induces NK cell-mediated cytotoxicity. Interacts with PIK3R1 and GRB2. Interacts with CLEC5A. Forms an CLEC5A/TYROBP/HCST trimolecular complex depending almost solely on TYROBP. Interacts with KLRK1. Interacts with CD300H. Phosphorylated; PIK3R1 and GRB2 associate specifically with tyrosine-phosphorylated HCST. In terms of processing, O-glycosylated.

It localises to the membrane. In terms of biological role, transmembrane adapter protein which associates with KLRK1 to form an activation receptor KLRK1-HCST in lymphoid and myeloid cells; this receptor plays a major role in triggering cytotoxicity against target cells expressing cell surface ligands such as MHC class I chain-related MICA and MICB, and UL16-binding proteins (ULBPs); these ligands are up-regulated by stress conditions and pathological state such as viral infection and tumor transformation. Functions as a docking site for PI3-kinase PIK3R1 and GRB2. Interaction of ULBPs with KLRK1-HCST triggers calcium mobilization and activation of the PIK3R1, MAP2K/ERK, and JAK2/STAT5 signaling pathways. Both PIK3R1 and GRB2 are required for full KLRK1-HCST-mediated activation and ultimate killing of target cells. In NK cells, KLRK1-HCST signaling directly induces cytotoxicity and enhances cytokine production initiated via DAP12/TYROBP-associated receptors. In T-cells, it provides primarily costimulation for TCR-induced signals. KLRK1-HCST receptor plays a role in immune surveillance against tumors and is required for cytolysis of tumors cells; indeed, melanoma cells that do not express KLRK1 ligands escape from immune surveillance mediated by NK cells. In Bos taurus (Bovine), this protein is Hematopoietic cell signal transducer (HCST).